The following is a 368-amino-acid chain: D-alanine--D-alanine ligase (368 aa).

Positions 145 to 348 constitute an ATP-grasp domain; that stretch reads KRLLQGAGLH…YQDLITTLIE (204 aa). An ATP-binding site is contributed by 175-230; it reads ADQLGLPLFIKPANQGSSVGVNKATTEAEFTAAIEEAFSYDHKVLIEAAIKGREIE. Mg(2+) is bound by residues Asp-302, Glu-315, and Asn-317.

The protein belongs to the D-alanine--D-alanine ligase family. Mg(2+) is required as a cofactor. Mn(2+) serves as cofactor.

The protein localises to the cytoplasm. It carries out the reaction 2 D-alanine + ATP = D-alanyl-D-alanine + ADP + phosphate + H(+). It functions in the pathway cell wall biogenesis; peptidoglycan biosynthesis. Cell wall formation. The protein is D-alanine--D-alanine ligase of Shouchella clausii (strain KSM-K16) (Alkalihalobacillus clausii).